A 597-amino-acid chain; its full sequence is MQHIRNFSIIAHIDHGKSTLADRLIHRCGGLAEREMSAQVLDSMDIERERGITIKAQTASLQYKSQDGTVYNLNLIDTPGHVDFSYEVSRSLSACEGALLVVDASQGVEAQTVANCYTAIELGVEVLPVLNKMDLPQADPEAARQEVEDVIGIDASEAVLASAKTGMGIDEILESIVARVPPPKGDPSAPLQALIIDSWFDNYVGVVMLVRIVNGVLKPKDKILLMASHATHLCEQIGVFTPKSQPRPELSAGEVGFVIAGIKELEHAKVGDTITLAGKPAAEPLPGFKEVKPQVFAGLYPVESSEYDQLRDSLEKLKLNDAALMFEPEVSQALGFGFRCGFLGLLHMEIVQERLEREFDMDIITTAPSVVYEVEQRDGTVVTIESPSRMPEIAKIADIREPIVKVTLFMPQEYVGPVMTLCNNKRGVQLNMSYHGRQVHLTYEIPLAEIVLDFFDKLKSVSRGYASMDYEFVEYRSADVVKVDLLINGDRVDALAMIAHRNNARYRAREVVSRMRGLIPRQMFDVAIQAAIGAEVIARENVKALRKNVLAKCYGGDISRKKKLLEKQKAGKKRMKQVGSVEIPQEAFLAILQVEDK.

A tr-type G domain is found at 2 to 184 (QHIRNFSIIA…SIVARVPPPK (183 aa)). Residues 14–19 (DHGKST) and 131–134 (NKMD) contribute to the GTP site.

The protein belongs to the TRAFAC class translation factor GTPase superfamily. Classic translation factor GTPase family. LepA subfamily.

Its subcellular location is the cell inner membrane. It carries out the reaction GTP + H2O = GDP + phosphate + H(+). Required for accurate and efficient protein synthesis under certain stress conditions. May act as a fidelity factor of the translation reaction, by catalyzing a one-codon backward translocation of tRNAs on improperly translocated ribosomes. Back-translocation proceeds from a post-translocation (POST) complex to a pre-translocation (PRE) complex, thus giving elongation factor G a second chance to translocate the tRNAs correctly. Binds to ribosomes in a GTP-dependent manner. The protein is Elongation factor 4 of Bordetella bronchiseptica (strain ATCC BAA-588 / NCTC 13252 / RB50) (Alcaligenes bronchisepticus).